Consider the following 178-residue polypeptide: MAESVTIARPYAEALFRTAKESGNLAKWSEQVSLLGQVAANPDVSSAIGDPNVAAPQLVDLFRSACGTAVDAELSNFIQLLSNNDRLGLLPEIAGLYETYKRAEEGTKQADIVSAFPIDDNQVKALIPQLEAVFKTKLEAAVSVDPTLIGGIKVIVGDQMLDASVRGKLDAMATALNN.

The protein belongs to the ATPase delta chain family. F-type ATPases have 2 components, F(1) - the catalytic core - and F(0) - the membrane proton channel. F(1) has five subunits: alpha(3), beta(3), gamma(1), delta(1), epsilon(1). F(0) has three main subunits: a(1), b(2) and c(10-14). The alpha and beta chains form an alternating ring which encloses part of the gamma chain. F(1) is attached to F(0) by a central stalk formed by the gamma and epsilon chains, while a peripheral stalk is formed by the delta and b chains.

It is found in the cell inner membrane. Functionally, f(1)F(0) ATP synthase produces ATP from ADP in the presence of a proton or sodium gradient. F-type ATPases consist of two structural domains, F(1) containing the extramembraneous catalytic core and F(0) containing the membrane proton channel, linked together by a central stalk and a peripheral stalk. During catalysis, ATP synthesis in the catalytic domain of F(1) is coupled via a rotary mechanism of the central stalk subunits to proton translocation. Its function is as follows. This protein is part of the stalk that links CF(0) to CF(1). It either transmits conformational changes from CF(0) to CF(1) or is implicated in proton conduction. The sequence is that of ATP synthase subunit delta from Dechloromonas aromatica (strain RCB).